We begin with the raw amino-acid sequence, 124 residues long: Large ribosomal subunit protein bL12 (124 aa).

It belongs to the bacterial ribosomal protein bL12 family. In terms of assembly, homodimer. Part of the ribosomal stalk of the 50S ribosomal subunit. Forms a multimeric L10(L12)X complex, where L10 forms an elongated spine to which 2 to 4 L12 dimers bind in a sequential fashion. Binds GTP-bound translation factors.

In terms of biological role, forms part of the ribosomal stalk which helps the ribosome interact with GTP-bound translation factors. Is thus essential for accurate translation. The chain is Large ribosomal subunit protein bL12 from Allorhizobium ampelinum (strain ATCC BAA-846 / DSM 112012 / S4) (Agrobacterium vitis (strain S4)).